The sequence spans 493 residues: Glutamyl-tRNA(Gln) amidotransferase subunit A (493 aa).

Active-site charge relay system residues include Lys79 and Ser159. Ser183 acts as the Acyl-ester intermediate in catalysis.

It belongs to the amidase family. GatA subfamily. In terms of assembly, heterotrimer of A, B and C subunits.

The enzyme catalyses L-glutamyl-tRNA(Gln) + L-glutamine + ATP + H2O = L-glutaminyl-tRNA(Gln) + L-glutamate + ADP + phosphate + H(+). Its function is as follows. Allows the formation of correctly charged Gln-tRNA(Gln) through the transamidation of misacylated Glu-tRNA(Gln) in organisms which lack glutaminyl-tRNA synthetase. The reaction takes place in the presence of glutamine and ATP through an activated gamma-phospho-Glu-tRNA(Gln). This chain is Glutamyl-tRNA(Gln) amidotransferase subunit A, found in Rhizobium meliloti (strain 1021) (Ensifer meliloti).